We begin with the raw amino-acid sequence, 293 residues long: Fructokinase (293 aa).

Residue Thr133 coordinates ATP. The Zn(2+) site is built by His156, Cys174, His177, and Cys180. ATP-binding positions include Pro188 and 236–240; that span reads GVMAQ.

The protein belongs to the ROK (NagC/XylR) family. The cofactor is Mg(2+).

The enzyme catalyses D-fructose + ATP = D-fructose 6-phosphate + ADP + H(+). Its activity is regulated as follows. Inhibition by zinc ions. This is Fructokinase (scrK) from Streptococcus mutans serotype c (strain ATCC 700610 / UA159).